Consider the following 1012-residue polypeptide: MTGMRGLSVFISDVRNCQNKEAERLRVDKELGNIRTCFKNEKVLTPYKKKKYVWKMLYIHMLGYDVDFGHMEAVSLISAPKYPEKQVGYIVTSCLLNENHDFLKLAINTVRNDIIGRNETFQCLALTLVGNIGGRDFAESLAPDVQKLLISSSCRPLVRKKAALCLLRLFRKNPDAVNVDGWADRMAQLLDERDLGVLTSSTSLLVALVSNNHEAYSSCLPKCVKILERLARNQDVPQEYTYYGIPSPWLQVKAMRALQYFPTIEDPSTRKALFEVLQRILMGTDVVKNVNKNNASHAVLFEALSLVMHLDAEKEMMSQCVALLGKFISVREPNIRYLGLENMTRMLMVTDVQDIIKKHQSQIITSLKDPDISIRRRALDLLYGMCDVSNAKDIVEELLQYLSTAEFSMREELSLKAAILAEKFAPDLSWYVDVILQLIDKAGDFVSDDIWFRVVQFVTNNEDLQPYAASKAREYLDKIAIHETMVKVSAYILGEYGHLLARQPGCSASELFSILHEKLPTISTPTIPILLSTYAKLLMHAQPPDPELQKKVWAVFKKYESCIDVEIQQRAVEYFELSKKGPAFMDVLAEMPKFPERQSSLIKKAENVEDTADQSAIKLRAQQQPSNAMVLADQQPVNGAPPPLKVPILSGSTDPESVARSLSHPNGTLSNIDPQTPSPDLLSDLLGPLAIEAPPGAVSNEQHGPVGAEGVPDEVDGSAIVPVEEQTNTVELIGNIAERFHALCLKDSGVLYEDPHIQIGIKAEWRGHHGRLVLFMGNKNTSPLTSVQALILPPAHLRLDLSPVPDTIPPRAQVQSPLEVMNIRPSRDVAVLDFSYKFGANVVSAKLRIPATLNKFLQPLQLTSEEFFPQWRAISGPPLKLQEVVRGVRPLALPEMANLFNSFHVTICPGLDPNPNNLVASTTFYSESTGAILCLARIETDPADRTQLRMTVGTGDPTLTFELKEFIKEQLITVPMGSRALVPAAGPAPPVAQPPSPAALADDPGAMLAGLL.

4 HEAT repeats span residues 254-289, 354-391, 393-430, and 525-565; these read AMRA…VVKN, DIIK…VSNA, DIVE…DLSW, and PTIP…CIDV. Positions 652-678 are disordered; sequence STDPESVARSLSHPNGTLSNIDPQTPS. A compositionally biased stretch (polar residues) spans 663–675; that stretch reads SHPNGTLSNIDPQ. The 100-residue stretch at 742 to 841 folds into the GAE domain; it reads ALCLKDSGVL…LDFSYKFGAN (100 aa).

The protein belongs to the adaptor complexes large subunit family. As to quaternary structure, adaptor protein complex 2 (AP-2) is a heterotetramer composed of two large adaptins (alpha-type and beta-type subunits), a medium adaptin (mu-type subunit) and a small adaptin (sigma-type subunit). Binds to EPSIN2.

The protein resides in the membrane. It localises to the coated pit. Its function is as follows. Subunit of the adaptor protein complex 2 (AP-2). Adaptor protein complexes function in protein transport via transport vesicles in different membrane traffic pathways. Adaptor protein complexes are vesicle coat components and appear to be involved in cargo selection and vesicle formation. AP-2 is involved in clathrin-dependent endocytosis in which cargo proteins are incorporated into vesicles surrounded by clathrin (clathrin-coated vesicles, CCVs) which are destined for fusion with the early endosome. The complex binds polyphosphoinositides. This is AP-2 complex subunit alpha-1 (ALPHA-ADR) from Arabidopsis thaliana (Mouse-ear cress).